Reading from the N-terminus, the 65-residue chain is UPF0434 protein CC_0108 (65 aa).

The protein belongs to the UPF0434 family.

This chain is UPF0434 protein CC_0108, found in Caulobacter vibrioides (strain ATCC 19089 / CIP 103742 / CB 15) (Caulobacter crescentus).